Consider the following 101-residue polypeptide: NAD(P)H-quinone oxidoreductase subunit 4L, chloroplastic (101 aa).

Transmembrane regions (helical) follow at residues 2–22, 32–52, and 61–81; these read MFEY…YGLI, MCLE…SDLF, and IFSI…PAIV.

The protein belongs to the complex I subunit 4L family. As to quaternary structure, NDH is composed of at least 16 different subunits, 5 of which are encoded in the nucleus.

It localises to the plastid. It is found in the chloroplast thylakoid membrane. The catalysed reaction is a plastoquinone + NADH + (n+1) H(+)(in) = a plastoquinol + NAD(+) + n H(+)(out). It carries out the reaction a plastoquinone + NADPH + (n+1) H(+)(in) = a plastoquinol + NADP(+) + n H(+)(out). Functionally, NDH shuttles electrons from NAD(P)H:plastoquinone, via FMN and iron-sulfur (Fe-S) centers, to quinones in the photosynthetic chain and possibly in a chloroplast respiratory chain. The immediate electron acceptor for the enzyme in this species is believed to be plastoquinone. Couples the redox reaction to proton translocation, and thus conserves the redox energy in a proton gradient. The sequence is that of NAD(P)H-quinone oxidoreductase subunit 4L, chloroplastic from Amborella trichopoda.